The chain runs to 138 residues: Acidic phospholipase A2 1 (138 aa).

Residues 1 to 16 form the signal peptide; it reads MRTLWIMAVLLVGVDG. Cystine bridges form between Cys-42–Cys-131, Cys-44–Cys-60, Cys-59–Cys-110, Cys-65–Cys-138, Cys-66–Cys-103, Cys-73–Cys-97, and Cys-91–Cys-101. Tyr-43, Gly-45, and Gly-47 together coordinate Ca(2+). His-63 is a catalytic residue. Residue Asp-64 coordinates Ca(2+). Asp-104 is an active-site residue.

The protein belongs to the phospholipase A2 family. Group II subfamily. D49 sub-subfamily. As to quaternary structure, homodimer. The cofactor is Ca(2+). As to expression, expressed by the venom gland.

Its subcellular location is the secreted. It catalyses the reaction a 1,2-diacyl-sn-glycero-3-phosphocholine + H2O = a 1-acyl-sn-glycero-3-phosphocholine + a fatty acid + H(+). Functionally, snake venom phospholipase A2 (PLA2) that is highly lipolytic and myolytic. PLA2 catalyzes the calcium-dependent hydrolysis of the 2-acyl groups in 3-sn-phosphoglycerides. The chain is Acidic phospholipase A2 1 from Protobothrops flavoviridis (Habu).